We begin with the raw amino-acid sequence, 219 residues long: uncharacterized protein (219 aa).

The ACT domain maps to 4–79 (GLRIIAENKI…YIIEIEEEES (76 aa)).

This is an uncharacterized protein from Archaeoglobus fulgidus (strain ATCC 49558 / DSM 4304 / JCM 9628 / NBRC 100126 / VC-16).